Reading from the N-terminus, the 184-residue chain is Large ribosomal subunit protein uL6 (184 aa).

The protein belongs to the universal ribosomal protein uL6 family. In terms of assembly, part of the 50S ribosomal subunit.

In terms of biological role, this protein binds to the 23S rRNA, and is important in its secondary structure. It is located near the subunit interface in the base of the L7/L12 stalk, and near the tRNA binding site of the peptidyltransferase center. The protein is Large ribosomal subunit protein uL6 of Fervidobacterium nodosum (strain ATCC 35602 / DSM 5306 / Rt17-B1).